The primary structure comprises 1435 residues: Dicer-like protein 2 (1435 aa).

The 181-residue stretch at Met-54 to Ala-234 folds into the Helicase ATP-binding domain. Residue Met-67–Thr-74 coordinates ATP. The DEAH box signature appears at Asp-175–His-178. One can recognise a Helicase C-terminal domain in the interval Lys-400–Gln-564. The region spanning Ala-591–Glu-684 is the Dicer dsRNA-binding fold domain. RNase III domains lie at Ala-956–Gly-1099 and Leu-1141–Gln-1323. Positions 1178, 1309, and 1312 each coordinate Mg(2+).

Belongs to the helicase family. Dicer subfamily. It depends on Mg(2+) as a cofactor. Mn(2+) serves as cofactor.

In terms of biological role, dicer-like endonuclease involved in cleaving double-stranded RNA in the RNA interference (RNAi) pathway. Produces 21 to 25 bp dsRNAs (siRNAs) which target the selective destruction of homologous RNAs leading to sequence-specific suppression of gene expression, called post-transcriptional gene silencing (PTGS). Part of a broad host defense response against viral infection and transposons. The chain is Dicer-like protein 2 (DCL2) from Coccidioides immitis (strain RS) (Valley fever fungus).